A 280-amino-acid polypeptide reads, in one-letter code: Shikimate dehydrogenase (NADP(+)) (280 aa).

Shikimate is bound by residues 20–22 (SRS) and T67. The active-site Proton acceptor is the K71. NADP(+) is bound at residue D82. Residues N91 and D106 each coordinate shikimate. Residues 131-135 (GAGGS) and L220 each bind NADP(+). Y222 contributes to the shikimate binding site. Residue G243 coordinates NADP(+).

Belongs to the shikimate dehydrogenase family. In terms of assembly, homodimer.

It carries out the reaction shikimate + NADP(+) = 3-dehydroshikimate + NADPH + H(+). Its pathway is metabolic intermediate biosynthesis; chorismate biosynthesis; chorismate from D-erythrose 4-phosphate and phosphoenolpyruvate: step 4/7. Functionally, involved in the biosynthesis of the chorismate, which leads to the biosynthesis of aromatic amino acids. Catalyzes the reversible NADPH linked reduction of 3-dehydroshikimate (DHSA) to yield shikimate (SA). In Rhodopseudomonas palustris (strain HaA2), this protein is Shikimate dehydrogenase (NADP(+)).